We begin with the raw amino-acid sequence, 572 residues long: Proline--tRNA ligase (572 aa).

It belongs to the class-II aminoacyl-tRNA synthetase family. ProS type 1 subfamily. In terms of assembly, homodimer.

The protein localises to the cytoplasm. It carries out the reaction tRNA(Pro) + L-proline + ATP = L-prolyl-tRNA(Pro) + AMP + diphosphate. Functionally, catalyzes the attachment of proline to tRNA(Pro) in a two-step reaction: proline is first activated by ATP to form Pro-AMP and then transferred to the acceptor end of tRNA(Pro). As ProRS can inadvertently accommodate and process non-cognate amino acids such as alanine and cysteine, to avoid such errors it has two additional distinct editing activities against alanine. One activity is designated as 'pretransfer' editing and involves the tRNA(Pro)-independent hydrolysis of activated Ala-AMP. The other activity is designated 'posttransfer' editing and involves deacylation of mischarged Ala-tRNA(Pro). The misacylated Cys-tRNA(Pro) is not edited by ProRS. The sequence is that of Proline--tRNA ligase from Leuconostoc mesenteroides subsp. mesenteroides (strain ATCC 8293 / DSM 20343 / BCRC 11652 / CCM 1803 / JCM 6124 / NCDO 523 / NBRC 100496 / NCIMB 8023 / NCTC 12954 / NRRL B-1118 / 37Y).